A 255-amino-acid polypeptide reads, in one-letter code: Proteasome subunit alpha type-3 (255 aa).

Ser-2 carries the N-acetylserine modification. N6-acetyllysine is present on residues Lys-57, Lys-206, and Lys-230. Phosphoserine is present on residues Ser-243 and Ser-250.

The protein belongs to the peptidase T1A family. In terms of assembly, the 26S proteasome consists of a 20S proteasome core and two 19S regulatory subunits. The 20S proteasome core is a barrel-shaped complex made of 28 subunits that are arranged in four stacked rings. The two outer rings are each formed by seven alpha subunits, and the two inner rings are formed by seven beta subunits. The proteolytic activity is exerted by three beta-subunits PSMB5, PSMB6 and PSMB7. Interacts with AURKB. Interacts with CDKN1A. Interacts with MDM2 and RB1. Interacts with the C-terminus of TBXA2R isoform 2. Interacts with DNAJB2. (Microbial infection) Interacts with HIV-1 Tat protein. As to quaternary structure, (Microbial infection) Interacts with hepatitis C virus (HCV) F protein. In terms of assembly, (Microbial infection) Interacts with Epstein-Barr virus EBNA3 proteins.

Its subcellular location is the cytoplasm. The protein resides in the nucleus. In terms of biological role, component of the 20S core proteasome complex involved in the proteolytic degradation of most intracellular proteins. This complex plays numerous essential roles within the cell by associating with different regulatory particles. Associated with two 19S regulatory particles, forms the 26S proteasome and thus participates in the ATP-dependent degradation of ubiquitinated proteins. The 26S proteasome plays a key role in the maintenance of protein homeostasis by removing misfolded or damaged proteins that could impair cellular functions, and by removing proteins whose functions are no longer required. Associated with the PA200 or PA28, the 20S proteasome mediates ubiquitin-independent protein degradation. This type of proteolysis is required in several pathways including spermatogenesis (20S-PA200 complex) or generation of a subset of MHC class I-presented antigenic peptides (20S-PA28 complex). Binds to the C-terminus of CDKN1A and thereby mediates its degradation. Negatively regulates the membrane trafficking of the cell-surface thromboxane A2 receptor (TBXA2R) isoform 2. The protein is Proteasome subunit alpha type-3 of Homo sapiens (Human).